Here is a 264-residue protein sequence, read N- to C-terminus: S-adenosylmethionine decarboxylase proenzyme (264 aa).

Ser113 serves as the catalytic Schiff-base intermediate with substrate; via pyruvic acid. Pyruvic acid (Ser); by autocatalysis is present on Ser113. His118 functions as the Proton acceptor; for processing activity in the catalytic mechanism. Cys141 functions as the Proton donor; for catalytic activity in the catalytic mechanism.

Belongs to the prokaryotic AdoMetDC family. Type 2 subfamily. In terms of assembly, heterooctamer of four alpha and four beta chains arranged as a tetramer of alpha/beta heterodimers. The cofactor is pyruvate. Post-translationally, is synthesized initially as an inactive proenzyme. Formation of the active enzyme involves a self-maturation process in which the active site pyruvoyl group is generated from an internal serine residue via an autocatalytic post-translational modification. Two non-identical subunits are generated from the proenzyme in this reaction, and the pyruvate is formed at the N-terminus of the alpha chain, which is derived from the carboxyl end of the proenzyme. The post-translation cleavage follows an unusual pathway, termed non-hydrolytic serinolysis, in which the side chain hydroxyl group of the serine supplies its oxygen atom to form the C-terminus of the beta chain, while the remainder of the serine residue undergoes an oxidative deamination to produce ammonia and the pyruvoyl group blocking the N-terminus of the alpha chain.

The catalysed reaction is S-adenosyl-L-methionine + H(+) = S-adenosyl 3-(methylsulfanyl)propylamine + CO2. It participates in amine and polyamine biosynthesis; S-adenosylmethioninamine biosynthesis; S-adenosylmethioninamine from S-adenosyl-L-methionine: step 1/1. Its function is as follows. Catalyzes the decarboxylation of S-adenosylmethionine to S-adenosylmethioninamine (dcAdoMet), the propylamine donor required for the synthesis of the polyamines spermine and spermidine from the diamine putrescine. This chain is S-adenosylmethionine decarboxylase proenzyme, found in Pseudomonas syringae pv. tomato (strain ATCC BAA-871 / DC3000).